Here is a 28-residue protein sequence, read N- to C-terminus: Conotoxin Cl1.2 (28 aa).

In terms of processing, contains 2 disulfide bonds. In terms of tissue distribution, expressed by the venom duct.

The protein localises to the secreted. This Californiconus californicus (California cone) protein is Conotoxin Cl1.2.